Reading from the N-terminus, the 174-residue chain is Small ribosomal subunit protein uS5 (174 aa).

One can recognise an S5 DRBM domain in the interval 16 to 79 (FSELIVSVRR…NAARKNMIRV (64 aa)).

It belongs to the universal ribosomal protein uS5 family. As to quaternary structure, part of the 30S ribosomal subunit. Contacts proteins S4 and S8.

In terms of biological role, with S4 and S12 plays an important role in translational accuracy. Located at the back of the 30S subunit body where it stabilizes the conformation of the head with respect to the body. The chain is Small ribosomal subunit protein uS5 from Ehrlichia ruminantium (strain Gardel).